A 71-amino-acid chain; its full sequence is UPF0346 protein Bcer98_1690 (71 aa).

Belongs to the UPF0346 family.

The protein is UPF0346 protein Bcer98_1690 of Bacillus cytotoxicus (strain DSM 22905 / CIP 110041 / 391-98 / NVH 391-98).